Reading from the N-terminus, the 417-residue chain is Tol-Pal system protein TolB (417 aa).

The first 16 residues, 1-16 (MKYLWLFLIYAIGLFA), serve as a signal peptide directing secretion.

Belongs to the TolB family. The Tol-Pal system is composed of five core proteins: the inner membrane proteins TolA, TolQ and TolR, the periplasmic protein TolB and the outer membrane protein Pal. They form a network linking the inner and outer membranes and the peptidoglycan layer.

It localises to the periplasm. Its function is as follows. Part of the Tol-Pal system, which plays a role in outer membrane invagination during cell division and is important for maintaining outer membrane integrity. In Helicobacter pylori (strain J99 / ATCC 700824) (Campylobacter pylori J99), this protein is Tol-Pal system protein TolB.